Here is a 218-residue protein sequence, read N- to C-terminus: Ribose-5-phosphate isomerase A (218 aa).

Substrate contacts are provided by residues 28–31 (TGST), 81–84 (DGAD), and 94–97 (KGGG). Catalysis depends on Glu-103, which acts as the Proton acceptor. Lys-121 lines the substrate pocket.

Belongs to the ribose 5-phosphate isomerase family. As to quaternary structure, homodimer.

It carries out the reaction aldehydo-D-ribose 5-phosphate = D-ribulose 5-phosphate. It functions in the pathway carbohydrate degradation; pentose phosphate pathway; D-ribose 5-phosphate from D-ribulose 5-phosphate (non-oxidative stage): step 1/1. Catalyzes the reversible conversion of ribose-5-phosphate to ribulose 5-phosphate. This is Ribose-5-phosphate isomerase A from Colwellia psychrerythraea (strain 34H / ATCC BAA-681) (Vibrio psychroerythus).